Consider the following 111-residue polypeptide: Small ribosomal subunit protein uS10 (111 aa).

The protein belongs to the universal ribosomal protein uS10 family. Part of the 30S ribosomal subunit.

Involved in the binding of tRNA to the ribosomes. The protein is Small ribosomal subunit protein uS10 of Xanthomonas euvesicatoria pv. vesicatoria (strain 85-10) (Xanthomonas campestris pv. vesicatoria).